A 37-amino-acid polypeptide reads, in one-letter code: Large ribosomal subunit protein bL36A (37 aa).

Belongs to the bacterial ribosomal protein bL36 family.

The protein is Large ribosomal subunit protein bL36A of Haemophilus ducreyi (strain 35000HP / ATCC 700724).